The sequence spans 147 residues: uncharacterized protein (147 aa).

Residues 23–48 (EEVSQPEPNTANDSSTEYKGKSKDDF) form a disordered region. The span at 28-37 (PEPNTANDSS) shows a compositional bias: polar residues. Basic and acidic residues predominate over residues 38 to 48 (TEYKGKSKDDF). The helical transmembrane segment at 85–105 (LMFCIIACSFICAIQFLFFII) threads the bilayer.

Its subcellular location is the membrane. This is an uncharacterized protein from Saccharomyces cerevisiae (strain ATCC 204508 / S288c) (Baker's yeast).